Reading from the N-terminus, the 263-residue chain is Glutamate racemase (263 aa).

Substrate contacts are provided by residues 10–11 and 42–43; these read DS and YG. Cysteine 73 acts as the Proton donor/acceptor in catalysis. 74–75 is a binding site for substrate; sequence NS. Catalysis depends on cysteine 183, which acts as the Proton donor/acceptor. 184 to 185 contributes to the substrate binding site; the sequence is TH.

The protein belongs to the aspartate/glutamate racemases family.

The catalysed reaction is L-glutamate = D-glutamate. It functions in the pathway cell wall biogenesis; peptidoglycan biosynthesis. Its function is as follows. Provides the (R)-glutamate required for cell wall biosynthesis. This is Glutamate racemase from Acidothermus cellulolyticus (strain ATCC 43068 / DSM 8971 / 11B).